Consider the following 55-residue polypeptide: uncharacterized protein (55 aa).

It localises to the plastid. This is an uncharacterized protein from Cuscuta reflexa (Southern Asian dodder).